We begin with the raw amino-acid sequence, 185 residues long: uncharacterized protein (185 aa).

This is an uncharacterized protein from Archaeoglobus fulgidus (strain ATCC 49558 / DSM 4304 / JCM 9628 / NBRC 100126 / VC-16).